A 468-amino-acid polypeptide reads, in one-letter code: Putative proline/betaine transporter (468 aa).

12 helical membrane-spanning segments follow: residues Val-20–Ala-42, Phe-63–Ile-83, Val-91–Pro-111, Met-115–Thr-135, Ile-164–Leu-184, Ala-191–Leu-211, Ile-246–Tyr-266, Val-284–Ala-304, Val-312–Asn-332, Leu-336–Thr-356, Val-376–Leu-396, and Ile-403–Val-423.

It belongs to the major facilitator superfamily. Metabolite:H+ Symporter (MHS) family (TC 2.A.1.6) family.

The protein localises to the cell membrane. Functionally, may be a proton symporter involved in the uptake of osmolytes such as proline and glycine betaine. The protein is Putative proline/betaine transporter (proP) of Staphylococcus haemolyticus (strain JCSC1435).